A 162-amino-acid polypeptide reads, in one-letter code: 3-dehydroquinate dehydratase (162 aa).

Tyr-22 functions as the Proton acceptor in the catalytic mechanism. Residues Asn-73, His-79, and Asp-86 each contribute to the substrate site. His-99 acts as the Proton donor in catalysis. Substrate contacts are provided by residues 100-101 and Arg-110; that span reads LS.

The protein belongs to the type-II 3-dehydroquinase family. As to quaternary structure, homododecamer.

The enzyme catalyses 3-dehydroquinate = 3-dehydroshikimate + H2O. It functions in the pathway metabolic intermediate biosynthesis; chorismate biosynthesis; chorismate from D-erythrose 4-phosphate and phosphoenolpyruvate: step 3/7. In terms of biological role, catalyzes a trans-dehydration via an enolate intermediate. In Sulfurovum sp. (strain NBC37-1), this protein is 3-dehydroquinate dehydratase.